We begin with the raw amino-acid sequence, 49 residues long: Large ribosomal subunit protein bL33B (49 aa).

This sequence belongs to the bacterial ribosomal protein bL33 family.

The protein is Large ribosomal subunit protein bL33B of Bacillus cytotoxicus (strain DSM 22905 / CIP 110041 / 391-98 / NVH 391-98).